A 33-amino-acid chain; its full sequence is GILDTLKNLAKTAGKGALQGLVKMASCKLSGQC.

Cysteines 27 and 33 form a disulfide.

It belongs to the frog skin active peptide (FSAP) family. Brevinin subfamily. As to expression, expressed by the skin glands.

Its subcellular location is the secreted. Shows antibacterial activity against representative Gram-negative and Gram-positive bacterial species, and hemolytic activity. The chain is Brevinin-2Eb from Pelophylax lessonae (Pool frog).